The chain runs to 794 residues: DNA ligase (794 aa).

NAD(+)-binding positions include 35–39 (DAEYD), 84–85 (SL), and glutamate 126. The N6-AMP-lysine intermediate role is filled by lysine 128. Positions 149, 186, 302, and 326 each coordinate NAD(+). Positions 420, 423, 450, and 456 each coordinate Zn(2+). In terms of domain architecture, BRCT spans 711–794 (VEGLPLAGQT…KLFDEHGVAR (84 aa)).

Belongs to the NAD-dependent DNA ligase family. LigA subfamily. Requires Mg(2+) as cofactor. Mn(2+) serves as cofactor.

It carries out the reaction NAD(+) + (deoxyribonucleotide)n-3'-hydroxyl + 5'-phospho-(deoxyribonucleotide)m = (deoxyribonucleotide)n+m + AMP + beta-nicotinamide D-nucleotide.. DNA ligase that catalyzes the formation of phosphodiester linkages between 5'-phosphoryl and 3'-hydroxyl groups in double-stranded DNA using NAD as a coenzyme and as the energy source for the reaction. It is essential for DNA replication and repair of damaged DNA. The protein is DNA ligase of Pseudomonas aeruginosa (strain LESB58).